A 124-amino-acid polypeptide reads, in one-letter code: Fluoride-specific ion channel FluC (124 aa).

A run of 4 helical transmembrane segments spans residues 4–24 (VIFI…LSGW), 32–52 (AFPY…GLIM), 68–88 (GLTI…YETF), and 96–116 (LLIA…FTWL). Residues G75 and T78 each contribute to the Na(+) site.

It belongs to the fluoride channel Fluc/FEX (TC 1.A.43) family.

The protein localises to the cell inner membrane. It catalyses the reaction fluoride(in) = fluoride(out). Its activity is regulated as follows. Na(+) is not transported, but it plays an essential structural role and its presence is essential for fluoride channel function. Its function is as follows. Fluoride-specific ion channel. Important for reducing fluoride concentration in the cell, thus reducing its toxicity. This is Fluoride-specific ion channel FluC from Geotalea daltonii (strain DSM 22248 / JCM 15807 / FRC-32) (Geobacter daltonii).